We begin with the raw amino-acid sequence, 145 residues long: Small ribosomal subunit protein uS19 (145 aa).

Ala2 is subject to N-acetylalanine. Lys108 is covalently cross-linked (Glycyl lysine isopeptide (Lys-Gly) (interchain with G-Cter in SUMO2)).

It belongs to the universal ribosomal protein uS19 family. Component of the small ribosomal subunit.

It is found in the cytoplasm. In terms of biological role, component of the small ribosomal subunit. The ribosome is a large ribonucleoprotein complex responsible for the synthesis of proteins in the cell. In Mesocricetus auratus (Golden hamster), this protein is Small ribosomal subunit protein uS19 (RPS15).